The following is a 146-amino-acid chain: uncharacterized protein (146 aa).

The tract at residues 87-121 is disordered; sequence SRSHHSTAKSAKSALSSDSGDGSDPDPEPETFPSA. The span at 94-106 shows a compositional bias: low complexity; the sequence is AKSAKSALSSDSG.

This is an uncharacterized protein from Escherichia coli (strain K12).